The sequence spans 336 residues: Probable G-protein coupled receptor 160 (336 aa).

Over 1–21 (MTALPSKNCSFQYQSHQAPRS) the chain is Extracellular. Asn-8 carries N-linked (GlcNAc...) asparagine glycosylation. Residues 22-42 (LDATCLLLLIILGKVLLNVLI) form a helical membrane-spanning segment. Topologically, residues 43–56 (LRVKRKDTSWSFME) are cytoplasmic. The chain crosses the membrane as a helical span at residues 57–77 (YFCFSLALVDLLLLVNISVLT). Residues 78–95 (YFRDFVVLGIRFTNYHIC) are Extracellular-facing. A helical transmembrane segment spans residues 96–116 (LLTQIVSFAYGFLHYPVCSLA). The Cytoplasmic segment spans residues 117-136 (CIDYWCNLSRATKPSSRWQK). A helical transmembrane segment spans residues 137-157 (LLYLLTVILTWISVLAYVLGD). The Extracellular segment spans residues 158-187 (PAISASLKTHKTSVNQCPSYVSTQSHWLSL). A helical membrane pass occupies residues 188 to 208 (SMLMILSVAFLISWQEVVALI). The Cytoplasmic segment spans residues 209–243 (QAIRIASYKNKAVLYFPFPPHTSYTVSPRAVLLPR). A helical transmembrane segment spans residues 244–264 (LIVCFLGTWFPFVALQVLILS). Topologically, residues 265–272 (LRVQIPAY) are extracellular. A helical membrane pass occupies residues 273–293 (IEMNVPWLYFVNSFLIAAVYW). Over 294-336 (FNCHKLYWRDGMFPVDPFINWKCCFVPVHRLKQVERPMSIIIC) the chain is Cytoplasmic.

The protein belongs to the G-protein coupled receptor 1 family.

It is found in the cell membrane. Orphan receptor. This Rattus norvegicus (Rat) protein is Probable G-protein coupled receptor 160 (Gpr160).